A 782-amino-acid polypeptide reads, in one-letter code: Chondroitin proteoglycan 4 (782 aa).

Positions 1–18 are cleaved as a signal peptide; it reads MRLVYSLIFLLFIPFSHP. Residues asparagine 76, asparagine 208, asparagine 462, asparagine 468, asparagine 474, and asparagine 503 are each glycosylated (N-linked (GlcNAc...) asparagine). The segment at 513 to 726 is disordered; that stretch reads ISEKSTEESS…EDQGSGNYKK (214 aa). 5 stretches are compositionally biased toward low complexity: residues 520–532, 548–566, 573–612, 662–672, and 688–722; these read ESSG…SGDG, SGSS…SSGE, SSGS…SSDT, FGESSGSSGES, and SGSS…QGSG. Residue asparagine 559 is glycosylated (N-linked (GlcNAc...) asparagine). O-linked (Xyl...) (chondroitin sulfate) serine glycosylation is present at serine 691. Asparagine 699 carries N-linked (GlcNAc...) asparagine glycosylation. O-linked (Xyl...) (chondroitin sulfate) serine glycosylation is found at serine 701, serine 704, serine 708, serine 714, and serine 721. Asparagine 743 carries N-linked (GlcNAc...) asparagine glycosylation.

This is Chondroitin proteoglycan 4 from Caenorhabditis elegans.